We begin with the raw amino-acid sequence, 148 residues long: Ubiquitin-conjugating enzyme E2-16 kDa (148 aa).

The region spanning 2 to 148 (SSSKRIAKEL…AKEWTKKYAV (147 aa)) is the UBC core domain. A Phosphoserine modification is found at Ser12. Residue Cys86 is the Glycyl thioester intermediate of the active site. Lys91 is covalently cross-linked (Glycyl lysine isopeptide (Lys-Gly) (interchain with G-Cter in ubiquitin)).

Belongs to the ubiquitin-conjugating enzyme family. Component of the RSP5-UBA1-UBC5 ubiquitin ligase complex composed of E3 RSP5, E1 UBA1 and E2 UBC5. Post-translationally, the N-terminus is blocked.

It catalyses the reaction S-ubiquitinyl-[E1 ubiquitin-activating enzyme]-L-cysteine + [E2 ubiquitin-conjugating enzyme]-L-cysteine = [E1 ubiquitin-activating enzyme]-L-cysteine + S-ubiquitinyl-[E2 ubiquitin-conjugating enzyme]-L-cysteine.. It participates in protein modification; protein ubiquitination. Catalyzes the covalent attachment of ubiquitin to other proteins. Mediates the selective degradation of short-lived and abnormal proteins. The RSP5-UBA1-UBC5 ubiquitin ligase complex ubiquitinates RPO21 forming 'Lys-63'-linked polyubiquitin chains. This Saccharomyces cerevisiae (strain ATCC 204508 / S288c) (Baker's yeast) protein is Ubiquitin-conjugating enzyme E2-16 kDa (UBC5).